We begin with the raw amino-acid sequence, 842 residues long: Protein P (842 aa).

A terminal protein domain (TP) region spans residues 1–177 (MPLSYQHFRR…FCGSPYSWEQ (177 aa)). A spacer region spans residues 178-345 (ELHHGAFLDG…YCLSHLVNLL (168 aa)). The disordered stretch occupies residues 186-273 (DGPSRMGEES…AKNIASRSAS (88 aa)). Over residues 223 to 239 (GPQSQQRPLDRSQQGRS) the composition is skewed to polar residues. Residues 346–689 (EDWGPCTEHG…YLNLYPVARQ (344 aa)) are polymerase/reverse transcriptase domain (RT). A Reverse transcriptase domain is found at 356–599 (RHHIRIPRTP…YSLNFMGYVI (244 aa)). Positions 428, 550, and 551 each coordinate Mg(2+).

This sequence belongs to the hepadnaviridae P protein family.

It catalyses the reaction DNA(n) + a 2'-deoxyribonucleoside 5'-triphosphate = DNA(n+1) + diphosphate. It carries out the reaction Endonucleolytic cleavage to 5'-phosphomonoester.. Activated by host HSP70 and HSP40 in vitro to be able to bind the epsilon loop of the pgRNA. Because deletion of the RNase H region renders the protein partly chaperone-independent, the chaperones may be needed indirectly to relieve occlusion of the RNA-binding site by this domain. Inhibited by several reverse-transcriptase inhibitors: Lamivudine, Adefovir and Entecavir. Its function is as follows. Multifunctional enzyme that converts the viral RNA genome into dsDNA in viral cytoplasmic capsids. This enzyme displays a DNA polymerase activity that can copy either DNA or RNA templates, and a ribonuclease H (RNase H) activity that cleaves the RNA strand of RNA-DNA heteroduplexes in a partially processive 3'- to 5'-endonucleasic mode. Neo-synthesized pregenomic RNA (pgRNA) are encapsidated together with the P protein, and reverse-transcribed inside the nucleocapsid. Initiation of reverse-transcription occurs first by binding the epsilon loop on the pgRNA genome, and is initiated by protein priming, thereby the 5'-end of (-)DNA is covalently linked to P protein. Partial (+)DNA is synthesized from the (-)DNA template and generates the relaxed circular DNA (RC-DNA) genome. After budding and infection, the RC-DNA migrates in the nucleus, and is converted into a plasmid-like covalently closed circular DNA (cccDNA). The activity of P protein does not seem to be necessary for cccDNA generation, and is presumably released from (+)DNA by host nuclear DNA repair machinery. The sequence is that of Protein P from Homo sapiens (Human).